Reading from the N-terminus, the 356-residue chain is Methionine import ATP-binding protein MetN 1 (356 aa).

Residues 15-254 form the ABC transporter domain; it reads IQIRALNKTY…PVQPITQELL (240 aa). 51–58 provides a ligand contact to ATP; it reads GKSGAGKS.

It belongs to the ABC transporter superfamily. Methionine importer (TC 3.A.1.24) family. As to quaternary structure, the complex is composed of two ATP-binding proteins (MetN), two transmembrane proteins (MetI) and a solute-binding protein (MetQ).

The protein resides in the cell inner membrane. The enzyme catalyses L-methionine(out) + ATP + H2O = L-methionine(in) + ADP + phosphate + H(+). It carries out the reaction D-methionine(out) + ATP + H2O = D-methionine(in) + ADP + phosphate + H(+). In terms of biological role, part of the ABC transporter complex MetNIQ involved in methionine import. Responsible for energy coupling to the transport system. This is Methionine import ATP-binding protein MetN 1 from Acinetobacter baylyi (strain ATCC 33305 / BD413 / ADP1).